We begin with the raw amino-acid sequence, 421 residues long: Fusaric acid cluster transcription factor FUB10 (421 aa).

A DNA-binding region (zn(2)-C6 fungal-type) is located at residues 16–47 (CDRCRAQKLRCHRDSGHSTDACLRCLKSGIEC). The segment at 50–92 (SKARPTGRPPSRQVQPTVVVEQGDTSSSSHTTDSSPSAGGTDM) is disordered. Over residues 74–86 (TSSSSHTTDSSPS) the composition is skewed to low complexity.

The protein localises to the nucleus. In terms of biological role, transcription factor that regulates the expression of the gene cluster that mediates the biosynthesis of fusaric acid, a mycotoxin with low to moderate toxicity to animals and humans, but with high phytotoxic properties. This chain is Fusaric acid cluster transcription factor FUB10, found in Gibberella moniliformis (strain M3125 / FGSC 7600) (Maize ear and stalk rot fungus).